A 346-amino-acid chain; its full sequence is S-adenosylmethionine:tRNA ribosyltransferase-isomerase (346 aa).

Belongs to the QueA family. In terms of assembly, monomer.

It is found in the cytoplasm. The catalysed reaction is 7-aminomethyl-7-carbaguanosine(34) in tRNA + S-adenosyl-L-methionine = epoxyqueuosine(34) in tRNA + adenine + L-methionine + 2 H(+). It functions in the pathway tRNA modification; tRNA-queuosine biosynthesis. In terms of biological role, transfers and isomerizes the ribose moiety from AdoMet to the 7-aminomethyl group of 7-deazaguanine (preQ1-tRNA) to give epoxyqueuosine (oQ-tRNA). This Lysinibacillus sphaericus (strain C3-41) protein is S-adenosylmethionine:tRNA ribosyltransferase-isomerase.